Consider the following 515-residue polypeptide: Maturase K (515 aa).

This sequence belongs to the intron maturase 2 family. MatK subfamily.

The protein resides in the plastid. It is found in the chloroplast. Its function is as follows. Usually encoded in the trnK tRNA gene intron. Probably assists in splicing its own and other chloroplast group II introns. In Sorghum bicolor (Sorghum), this protein is Maturase K.